We begin with the raw amino-acid sequence, 365 residues long: Probable ethanolamine-phosphate cytidylyltransferase (365 aa).

Residues 344 to 365 (EERQRRKMGKNATEQTTIKTYA) form a disordered region. Residues 355-365 (ATEQTTIKTYA) show a composition bias toward polar residues.

It belongs to the cytidylyltransferase family.

It carries out the reaction phosphoethanolamine + CTP + H(+) = CDP-ethanolamine + diphosphate. It participates in phospholipid metabolism; phosphatidylethanolamine biosynthesis; phosphatidylethanolamine from ethanolamine: step 2/3. The polypeptide is Probable ethanolamine-phosphate cytidylyltransferase (Schizosaccharomyces pombe (strain 972 / ATCC 24843) (Fission yeast)).